We begin with the raw amino-acid sequence, 621 residues long: Very-long-chain aldehyde decarbonylase GL1-5 (621 aa).

The next 5 helical transmembrane spans lie at 99-119 (IILSGILLYLGALYVPGGQHL), 126-146 (GAGLIALLHAGPVEFLYYWFH), 186-206 (LLFSIPLIACALTGTASIIAF), 224-244 (FELVPSWLFTWFPPLKYLMYT), and 332-352 (MWPLSWLSMVLTWTYGSSFTV). The region spanning 138–272 (VEFLYYWFHR…MPFYDYIYNT (135 aa)) is the Fatty acid hydroxylase domain.

The protein belongs to the sterol desaturase family. Homodimer. Expressed in panicles, developing spikelets, stamens and hulls and, at low levels, in roots, developing seeds, flag leaves and seedling shoots. Strongly expressed in the epidermal cells of anthers.

It is found in the endoplasmic reticulum membrane. The catalysed reaction is a long-chain fatty aldehyde + 2 NADPH + O2 + H(+) = a long-chain alkane + formate + 2 NADP(+) + H2O. Its function is as follows. Aldehyde decarbonylase involved in the conversion of aldehydes to alkanes. Core component of a very-long-chain alkane synthesis complex. Required for the biosynthesis of very-long-chain fatty acids (including polyesters) in cuticles, anther tapetum and pollen exine. The chain is Very-long-chain aldehyde decarbonylase GL1-5 from Oryza sativa subsp. japonica (Rice).